We begin with the raw amino-acid sequence, 133 residues long: Small ribosomal subunit protein bS6 (133 aa).

Belongs to the bacterial ribosomal protein bS6 family.

Binds together with bS18 to 16S ribosomal RNA. This Chlorobium limicola (strain DSM 245 / NBRC 103803 / 6330) protein is Small ribosomal subunit protein bS6.